Here is a 117-residue protein sequence, read N- to C-terminus: Ribosome-binding factor A (117 aa).

This sequence belongs to the RbfA family. In terms of assembly, monomer. Binds 30S ribosomal subunits, but not 50S ribosomal subunits or 70S ribosomes.

It is found in the cytoplasm. One of several proteins that assist in the late maturation steps of the functional core of the 30S ribosomal subunit. Associates with free 30S ribosomal subunits (but not with 30S subunits that are part of 70S ribosomes or polysomes). Required for efficient processing of 16S rRNA. May interact with the 5'-terminal helix region of 16S rRNA. The sequence is that of Ribosome-binding factor A from Petrotoga mobilis (strain DSM 10674 / SJ95).